We begin with the raw amino-acid sequence, 418 residues long: tRNA-2-methylthio-N(6)-dimethylallyladenosine synthase (418 aa).

In terms of domain architecture, MTTase N-terminal spans 2–118; the sequence is PGYYLWTIGC…WREIPEGFIL (117 aa). [4Fe-4S] cluster-binding residues include Cys11, Cys47, Cys81, Cys134, Cys138, and Cys141. A Radical SAM core domain is found at 120 to 351; it reads LRPPVSANVT…EDLQKETVGK (232 aa). Residues 346–414 enclose the TRAM domain; that stretch reads KETVGKANAA…PWSLQAKLVN (69 aa).

This sequence belongs to the methylthiotransferase family. MiaB subfamily. Monomer. Requires [4Fe-4S] cluster as cofactor.

The protein localises to the cytoplasm. It carries out the reaction N(6)-dimethylallyladenosine(37) in tRNA + (sulfur carrier)-SH + AH2 + 2 S-adenosyl-L-methionine = 2-methylsulfanyl-N(6)-dimethylallyladenosine(37) in tRNA + (sulfur carrier)-H + 5'-deoxyadenosine + L-methionine + A + S-adenosyl-L-homocysteine + 2 H(+). Functionally, catalyzes the methylthiolation of N6-(dimethylallyl)adenosine (i(6)A), leading to the formation of 2-methylthio-N6-(dimethylallyl)adenosine (ms(2)i(6)A) at position 37 in tRNAs that read codons beginning with uridine. The protein is tRNA-2-methylthio-N(6)-dimethylallyladenosine synthase of Dehalococcoides mccartyi (strain CBDB1).